A 681-amino-acid chain; its full sequence is DNA ligase (681 aa).

NAD(+) is bound by residues 32–36 (DIEYD), 81–82 (SL), and glutamate 113. Residue lysine 115 is the N6-AMP-lysine intermediate of the active site. NAD(+) contacts are provided by arginine 136, glutamate 173, lysine 290, and lysine 314. Zn(2+) contacts are provided by cysteine 408, cysteine 411, cysteine 426, and cysteine 432. The BRCT domain occupies 596-681 (EIDSPFAGKT…LNNHGDVSTL (86 aa)).

The protein belongs to the NAD-dependent DNA ligase family. LigA subfamily. It depends on Mg(2+) as a cofactor. Requires Mn(2+) as cofactor.

The enzyme catalyses NAD(+) + (deoxyribonucleotide)n-3'-hydroxyl + 5'-phospho-(deoxyribonucleotide)m = (deoxyribonucleotide)n+m + AMP + beta-nicotinamide D-nucleotide.. In terms of biological role, DNA ligase that catalyzes the formation of phosphodiester linkages between 5'-phosphoryl and 3'-hydroxyl groups in double-stranded DNA using NAD as a coenzyme and as the energy source for the reaction. It is essential for DNA replication and repair of damaged DNA. This Pectobacterium atrosepticum (strain SCRI 1043 / ATCC BAA-672) (Erwinia carotovora subsp. atroseptica) protein is DNA ligase.